A 305-amino-acid chain; its full sequence is Ornithine carbamoyltransferase (305 aa).

Carbamoyl phosphate-binding positions include 54–57, Gln-81, Arg-105, and 132–135; these read STRT and HPCQ. L-ornithine-binding positions include Asn-163, Asp-220, and 224–225; that span reads SM. Carbamoyl phosphate is bound by residues 260 to 261 and Arg-288; that span reads CL.

The protein belongs to the aspartate/ornithine carbamoyltransferase superfamily. OTCase family.

It is found in the cytoplasm. The enzyme catalyses carbamoyl phosphate + L-ornithine = L-citrulline + phosphate + H(+). Its pathway is amino-acid biosynthesis; L-arginine biosynthesis; L-arginine from L-ornithine and carbamoyl phosphate: step 1/3. Functionally, reversibly catalyzes the transfer of the carbamoyl group from carbamoyl phosphate (CP) to the N(epsilon) atom of ornithine (ORN) to produce L-citrulline. This chain is Ornithine carbamoyltransferase, found in Chromohalobacter salexigens (strain ATCC BAA-138 / DSM 3043 / CIP 106854 / NCIMB 13768 / 1H11).